The sequence spans 304 residues: Killer cell immunoglobulin-like receptor 2DS2 (304 aa).

Residues 1-21 form the signal peptide; sequence MSLMVVSMACVGFFLLQGAWP. The Extracellular portion of the chain corresponds to 22 to 245; sequence HEGVHRKPSL…SKTGNPRHLH (224 aa). Ig-like C2-type domains are found at residues 42 to 107 and 142 to 205; these read EETV…VTHS and GESV…FRDS. Intrachain disulfides connect Cys49-Cys100 and Cys149-Cys198. Asn84, Asn178, and Asn211 each carry an N-linked (GlcNAc...) asparagine glycan. The interval 220-239 is disordered; sequence VTGNPSNSWPSPTEPSSKTG. Residues 246 to 265 form a helical membrane-spanning segment; sequence VLIGTSVVKIPFTILLFFLL. Over 266–304 the chain is Cytoplasmic; it reads HRWCSNKKNAAVMDQEPAGNRTVNSEDSDEQDHQEVSYA. A disordered region spans residues 280–304; that stretch reads QEPAGNRTVNSEDSDEQDHQEVSYA.

It belongs to the immunoglobulin superfamily.

It localises to the cell membrane. Functionally, receptor on natural killer (NK) cells for HLA-C alleles. Does not inhibit the activity of NK cells. The chain is Killer cell immunoglobulin-like receptor 2DS2 from Homo sapiens (Human).